The primary structure comprises 283 residues: Bifunctional protein FolD (283 aa).

NADP(+) is bound by residues glycine 165–glycine 167, threonine 192, and valine 233.

This sequence belongs to the tetrahydrofolate dehydrogenase/cyclohydrolase family. Homodimer.

The enzyme catalyses (6R)-5,10-methylene-5,6,7,8-tetrahydrofolate + NADP(+) = (6R)-5,10-methenyltetrahydrofolate + NADPH. It catalyses the reaction (6R)-5,10-methenyltetrahydrofolate + H2O = (6R)-10-formyltetrahydrofolate + H(+). Its pathway is one-carbon metabolism; tetrahydrofolate interconversion. Catalyzes the oxidation of 5,10-methylenetetrahydrofolate to 5,10-methenyltetrahydrofolate and then the hydrolysis of 5,10-methenyltetrahydrofolate to 10-formyltetrahydrofolate. The sequence is that of Bifunctional protein FolD from Thermobifida fusca (strain YX).